The sequence spans 396 residues: L-lactate dehydrogenase (396 aa).

Positions 1-380 constitute an FMN hydroxy acid dehydrogenase domain; sequence MIISAASDYR…SGDSLVQELG (380 aa). Position 24 (Tyr24) interacts with substrate. Ser106 and Gln127 together coordinate FMN. Residue Tyr129 participates in substrate binding. FMN is bound at residue Thr155. Arg164 provides a ligand contact to substrate. Lys251 is a binding site for FMN. His275 serves as the catalytic Proton acceptor. Arg278 lines the substrate pocket. 306 to 330 is an FMN binding site; sequence DSGIRNGLDVVRMIALGADTVLLGR.

It belongs to the FMN-dependent alpha-hydroxy acid dehydrogenase family. FMN serves as cofactor.

It is found in the cell inner membrane. The catalysed reaction is (S)-lactate + A = pyruvate + AH2. Functionally, catalyzes the conversion of L-lactate to pyruvate. Is coupled to the respiratory chain. This is L-lactate dehydrogenase from Salmonella heidelberg (strain SL476).